Consider the following 584-residue polypeptide: MFS-type transporter gkaD (584 aa).

A compositionally biased stretch (low complexity) spans 1–11 (MAVDTETTTTT). A disordered region spans residues 1 to 60 (MAVDTETTTTTIPVTDSDRIDDQNNLTSNAIPHASEKTVPDSPASEQNEVSDESEDKPSK). Asn25 carries N-linked (GlcNAc...) asparagine glycosylation. Helical transmembrane passes span 65-85 (FGFY…SLEA), 99-119 (LGGA…QTAF), 134-154 (WPMI…GGSK), 167-187 (GIGS…LLPL), 196-216 (MIVS…GLIV), 223-243 (WVFY…FFFL), 262-282 (WIGN…LSWA), and 293-313 (VVVP…YEGS). N-linked (GlcNAc...) asparagine glycosylation is present at Asn328. The next 6 helical transmembrane spans lie at 334–354 (AFAV…FLPV), 369–389 (VQLL…GTLL), 398–418 (LQHG…LLDA), 425–445 (WVGY…VLLP), 462–482 (TWSF…TAVF), and 536–556 (LNVV…LVFL).

The protein belongs to the major facilitator superfamily.

The protein localises to the membrane. MFS-type transporter; part of the gene cluster that mediates the biosynthesis of GKK1032, fungal natural products containing a macrocyclic para-cyclophane connected to a decahydrofluorene ring system that show potent antitumor activities. The protein is MFS-type transporter gkaD of Penicillium citrinum.